We begin with the raw amino-acid sequence, 251 residues long: Retinoic acid early-inducible protein 1-epsilon (251 aa).

Positions 1 to 28 (MAKAAVTKRHHFMIQKLLILLSYGYTNG) are cleaved as a signal peptide. Cys-37 and Cys-56 are disulfide-bonded. N-linked (GlcNAc...) asparagine glycosylation is found at Asn-38, Asn-70, Asn-83, Asn-141, and Asn-154. A disulfide bridge connects residues Cys-88 and Cys-188. The disordered stretch occupies residues 196 to 228 (LKQSKEKPRSTSRSPSITQLTSTSPLPPPSHST). The segment covering 209–219 (SPSITQLTSTS) has biased composition (low complexity). Ser-225 carries the GPI-anchor amidated serine lipid modification. A propeptide spans 226–251 (HSTSKKGFISVGLIFISLLFAFAFAM) (removed in mature form).

It belongs to the NKG2D ligand family. Post-translationally, glycosylated.

The protein localises to the cell membrane. In terms of biological role, acts as a ligand for KLRK1. This Mus musculus (Mouse) protein is Retinoic acid early-inducible protein 1-epsilon (Raet1e).